Consider the following 339-residue polypeptide: DNA-directed RNA polymerase subunit alpha (339 aa).

The tract at residues 1–233 (MVREEVAGST…DLFLPFLHAE (233 aa)) is alpha N-terminal domain (alpha-NTD). The interval 264 to 339 (KKGIPLNCIF…IDLLKNKLSF (76 aa)) is alpha C-terminal domain (alpha-CTD).

Belongs to the RNA polymerase alpha chain family. As to quaternary structure, in plastids the minimal PEP RNA polymerase catalytic core is composed of four subunits: alpha, beta, beta', and beta''. When a (nuclear-encoded) sigma factor is associated with the core the holoenzyme is formed, which can initiate transcription.

The protein resides in the plastid. It localises to the chloroplast. It carries out the reaction RNA(n) + a ribonucleoside 5'-triphosphate = RNA(n+1) + diphosphate. Its function is as follows. DNA-dependent RNA polymerase catalyzes the transcription of DNA into RNA using the four ribonucleoside triphosphates as substrates. In Elymus hystrix (Eastern bottlebrush grass), this protein is DNA-directed RNA polymerase subunit alpha.